A 294-amino-acid chain; its full sequence is Tetraspanin-15 (294 aa).

Over 1 to 23 (MPRGDSEQVRYCARFSYLWLKFS) the chain is Cytoplasmic. A helical transmembrane segment spans residues 24–44 (LVIYSTVFWLIGGLVLSVGIY). Residues 45–62 (AEVERQKYKTLESAFLAP) are Extracellular-facing. Residues 63–83 (AIILILLGVVMFIVSFIGVLA) form a helical membrane-spanning segment. The Cytoplasmic segment spans residues 84 to 93 (SLRDNLCLLQ). Residues 94–114 (AFMYILGICLIIELIGGVVAL) form a helical membrane-spanning segment. The Extracellular segment spans residues 115–235 (IFRNQTIDFL…WFTDNYTIMA (121 aa)). N118 is a glycosylation site (N-linked (GlcNAc...) asparagine). 4 disulfides stabilise this stretch: C154/C219, C155/C185, C171/C179, and C186/C198. N-linked (GlcNAc...) asparagine glycosylation is found at N189 and N230. The helical transmembrane segment at 236-256 (GVLLGILLPQFLGVLLTFLYI) threads the bilayer. The Cytoplasmic portion of the chain corresponds to 257-294 (TRVEDIITEHSVTDGLLGPGTKAGVEAAGTGCCMCYPI).

This sequence belongs to the tetraspanin (TM4SF) family. In terms of assembly, interacts with ADAM10; the interaction influences ADAM10 substrate specificity, endocytosis and turnover. Post-translationally, palmitoylated.

Its subcellular location is the cell membrane. It localises to the late endosome membrane. Part of TspanC8 subgroup, composed of 6 members that interact with the transmembrane metalloprotease ADAM10. This interaction is required for ADAM10 exit from the endoplasmic reticulum and for enzymatic maturation and trafficking to the cell surface as well as substrate specificity. Different TspanC8/ADAM10 complexes have distinct substrates. Promotes ADAM10-mediated cleavage of CDH2. Negatively regulates ligand-induced Notch activity probably by regulating ADAM10 activity. The protein is Tetraspanin-15 (TSPAN15) of Bos taurus (Bovine).